A 184-amino-acid chain; its full sequence is MIKEILKKADEKMGKTIVALKKELASMKAGRANPAMLDRIEAEYYGSMTPLNQLGNISVPEARVLLIQPWDKGALSAIEKAILKSDLGLNPSNDGTVIRLVIPELTEETRKNIVKTVKKTGEEAKVAIRSIRRDCNDDVKNLKKDDVSEDDIKKAEDDIQKKTDKYIKEIDSIISAKEKEILSI.

This sequence belongs to the RRF family.

It is found in the cytoplasm. Its function is as follows. Responsible for the release of ribosomes from messenger RNA at the termination of protein biosynthesis. May increase the efficiency of translation by recycling ribosomes from one round of translation to another. This is Ribosome-recycling factor from Clostridium botulinum (strain ATCC 19397 / Type A).